The following is a 208-amino-acid chain: Translation initiation factor 2 subunit beta (208 aa).

Residues 144 to 202 (GIEEGKEYTVEISEVGSSGEGRASFRGFTIFVPGTKKGETVKVKIKKIKNDVAIAEVVS) enclose the TRAM domain.

The protein belongs to the eIF-2-beta/eIF-5 family. In terms of assembly, heterotrimer composed of an alpha, a beta and a gamma chain.

In terms of biological role, eIF-2 functions in the early steps of protein synthesis by forming a ternary complex with GTP and initiator tRNA. The polypeptide is Translation initiation factor 2 subunit beta (eif2b) (Thermoplasma volcanium (strain ATCC 51530 / DSM 4299 / JCM 9571 / NBRC 15438 / GSS1)).